The chain runs to 270 residues: Fibroblast growth factor 5 (270 aa).

An N-terminal signal peptide occupies residues 1–20; the sequence is MSLSLLLLLFLSHLILSAWA. The tract at residues 26–84 is disordered; that stretch reads LAPKGQPGPAATGRNPGGAGGSSTSGGTTSSSSSSVSSAPGASPGIRGSGSEQGSFQWS. Gly residues predominate over residues 40–49; that stretch reads NPGGAGGSST. Residues 50 to 70 are compositionally biased toward low complexity; it reads SGGTTSSSSSSVSSAPGASPG. The segment covering 75–84 has biased composition (polar residues); that stretch reads GSEQGSFQWS. N112 is a glycosylation site (N-linked (GlcNAc...) asparagine). The disordered stretch occupies residues 237–257; it reads EKKKPPSHVKPKVPLSAPRKS.

Belongs to the heparin-binding growth factors family. As to quaternary structure, interacts with FGFR1 and FGFR2. Affinity between fibroblast growth factors (FGFs) and their receptors is increased by heparan sulfate glycosaminoglycans that function as coreceptors.

Its subcellular location is the secreted. Functionally, plays an important role in the regulation of cell proliferation and cell differentiation. Required for normal regulation of the hair growth cycle. Functions as an inhibitor of hair elongation by promoting progression from anagen, the growth phase of the hair follicle, into catagen the apoptosis-induced regression phase. The chain is Fibroblast growth factor 5 (FGF5) from Canis lupus familiaris (Dog).